The chain runs to 300 residues: Chaperone protein dnaJ 50 (300 aa).

Positions 1-27 (MAPPVTERWCLALILLFLSLFVQSSTA) are cleaved as a signal peptide. Residues 28-122 (IYCGAEDCYA…RAKYGHKSDP (95 aa)) are Lumenal-facing. Residues 34-98 (DCYALLGVAQ…TTRAQYDYAI (65 aa)) enclose the J domain. N-linked (GlcNAc...) asparagine glycosylation is found at asparagine 46 and asparagine 88. The chain crosses the membrane as a helical span at residues 123-143 (RAVLVGLLVVLSAFQYLNNVA). Over 144–206 (RYNEAIATVK…LQIKGAEKPS (63 aa)) the chain is Cytoplasmic. Residues 207–227 (VWELLGVRFILLPYTIIKLLV) traverse the membrane as a helical segment. The Lumenal segment spans residues 228 to 300 (WYSSWVWRYK…EMRKESKRRR (73 aa)).

Expressed in leaves, flower buds and flowers.

The protein resides in the endoplasmic reticulum membrane. Functionally, may play a role in protein folding in the endoplasmic reticulum. This Arabidopsis thaliana (Mouse-ear cress) protein is Chaperone protein dnaJ 50 (C50).